The primary structure comprises 341 residues: Sphingolipid long chain base-responsive protein LSP1 (341 aa).

Residues 1 to 11 (MHRTYSLRNQR) are compositionally biased toward polar residues. Residues 1–32 (MHRTYSLRNQRAPTAAELQAPPPPPSSTKSKF) are disordered. Thr-233 carries the phosphothreonine modification. 2 stretches are compositionally biased toward acidic residues: residues 282 to 294 (YEDE…EEPE) and 305 to 323 (VEEE…DEAH). The interval 282–341 (YEDEDGEEEEEPEIQNGDIPGQVVEEEEVEWTTEVPVDDEAHEADHHVSQNGHTSGSENI) is disordered. Positions 330 to 341 (SQNGHTSGSENI) are enriched in polar residues.

In terms of processing, phosphorylated by PKH1 and PKH2. Phosphorylation is stimulated by sphingolipid long chain bases (LCBs). Post-translationally, N-glycosylated.

It localises to the cytoplasm. It is found in the cell cortex. Its function is as follows. Together with PIL1, main component of eisosomes, structures at the cell periphery underneath the plasma membrane that mark the site of endocytosis. Negative regulator of cell wall integrity (CWI) in unstressed cells, probably by inhibiting protein kinase PKH1/PHK2 activity and regulating their downstream CWI pathways PKC1-MAP kinase pathway and protein kinase YPK1 pathway. Activity may be regulated by the transient increase of sphingolipid long chain bases (LCBs) during heat stress. The sequence is that of Sphingolipid long chain base-responsive protein LSP1 (LSP1) from Saccharomyces cerevisiae (strain ATCC 204508 / S288c) (Baker's yeast).